We begin with the raw amino-acid sequence, 211 residues long: Troponin I, cardiac muscle (211 aa).

The tract at residues 1–23 (MADESGDAAGCPPPAPAPIRRQS) is disordered. Residue alanine 2 is modified to N-acetylalanine. The residue at position 5 (serine 5) is a Phosphoserine. Residues serine 23 and serine 24 each carry the phosphoserine; by PKA and PKD/PRKD1 modification. The residue at position 27 (tyrosine 27) is a Phosphotyrosine. Threonine 32 carries the post-translational modification Phosphothreonine; by STK4/MST1. Residues 33 to 80 (EPHAKKKSKISASRKLQLKTLMLQIAKQELEREAEERRGEKGRALSTR) are involved in binding TNC. Phosphoserine; by PKC/PRKCE is present on residues serine 43 and serine 45. At threonine 52 the chain carries Phosphothreonine; by STK4/MST1. Serine 78 bears the Phosphoserine mark. Threonine 79 carries the phosphothreonine modification. Phosphothreonine; by STK4/MST1 occurs at positions 130 and 144. Positions 130–150 (TQKIFDLRGKFKRPTLRRVRI) are involved in binding TNC and actin. Serine 151 is subject to Phosphoserine; by PAK3. Residue serine 167 is modified to Phosphoserine. Residue threonine 182 is modified to Phosphothreonine. Residue serine 200 is modified to Phosphoserine.

This sequence belongs to the troponin I family. Binds to actin and tropomyosin. Interacts with TRIM63. Interacts with STK4/MST1. Post-translationally, phosphorylated at Ser-23 and Ser-24 by PRKD1; phosphorylation reduces myofilament calcium sensitivity. Phosphorylated preferentially at Thr-32. Phosphorylation by STK4/MST1 alters its binding affinity to TNNC1 (cardiac Tn-C) and TNNT2 (cardiac Tn-T). Phosphorylated at Ser-43 and Ser-45 by PRKCE; phosphorylation increases myocardium contractile dysfunction.

Functionally, troponin I is the inhibitory subunit of troponin, the thin filament regulatory complex which confers calcium-sensitivity to striated muscle actomyosin ATPase activity. In Canis lupus familiaris (Dog), this protein is Troponin I, cardiac muscle (TNNI3).